We begin with the raw amino-acid sequence, 528 residues long: 2-isopropylmalate synthase (528 aa).

Residues 12–279 (IRIFDTTLRD…DSSINTPRIV (268 aa)) enclose the Pyruvate carboxyltransferase domain. Residues aspartate 21, histidine 214, histidine 216, and asparagine 250 each contribute to the Mn(2+) site. The tract at residues 401–528 (RLASMTISDV…STDVPTPATA (128 aa)) is regulatory domain.

Belongs to the alpha-IPM synthase/homocitrate synthase family. LeuA type 1 subfamily. In terms of assembly, homodimer. Mn(2+) serves as cofactor.

The protein resides in the cytoplasm. The enzyme catalyses 3-methyl-2-oxobutanoate + acetyl-CoA + H2O = (2S)-2-isopropylmalate + CoA + H(+). The protein operates within amino-acid biosynthesis; L-leucine biosynthesis; L-leucine from 3-methyl-2-oxobutanoate: step 1/4. Its function is as follows. Catalyzes the condensation of the acetyl group of acetyl-CoA with 3-methyl-2-oxobutanoate (2-ketoisovalerate) to form 3-carboxy-3-hydroxy-4-methylpentanoate (2-isopropylmalate). The chain is 2-isopropylmalate synthase from Stenotrophomonas maltophilia (strain K279a).